A 465-amino-acid polypeptide reads, in one-letter code: ATP synthase subunit beta (465 aa).

Position 152–159 (152–159) interacts with ATP; sequence GGAGVGKT.

The protein belongs to the ATPase alpha/beta chains family. F-type ATPases have 2 components, CF(1) - the catalytic core - and CF(0) - the membrane proton channel. CF(1) has five subunits: alpha(3), beta(3), gamma(1), delta(1), epsilon(1). CF(0) has three main subunits: a(1), b(2) and c(9-12). The alpha and beta chains form an alternating ring which encloses part of the gamma chain. CF(1) is attached to CF(0) by a central stalk formed by the gamma and epsilon chains, while a peripheral stalk is formed by the delta and b chains.

It is found in the cell inner membrane. The catalysed reaction is ATP + H2O + 4 H(+)(in) = ADP + phosphate + 5 H(+)(out). Its function is as follows. Produces ATP from ADP in the presence of a proton gradient across the membrane. The catalytic sites are hosted primarily by the beta subunits. The chain is ATP synthase subunit beta from Campylobacter fetus subsp. fetus (strain 82-40).